The primary structure comprises 248 residues: 5'-nucleotidase SurE (248 aa).

A divalent metal cation contacts are provided by aspartate 8, aspartate 9, serine 39, and asparagine 91.

Belongs to the SurE nucleotidase family. It depends on a divalent metal cation as a cofactor.

It is found in the cytoplasm. It catalyses the reaction a ribonucleoside 5'-phosphate + H2O = a ribonucleoside + phosphate. Nucleotidase that shows phosphatase activity on nucleoside 5'-monophosphates. The protein is 5'-nucleotidase SurE of Neisseria meningitidis serogroup C (strain 053442).